A 234-amino-acid chain; its full sequence is Putative lipoyltransferase 2, mitochondrial (234 aa).

Residues 1-28 (MPFVRPLVTVVRAGRHSYSAGLQLQQRL) constitute a mitochondrion transit peptide. In terms of domain architecture, BPL/LPL catalytic spans 39–220 (AEFRNYLVLQ…SFAKVFECRL (182 aa)). Substrate is bound by residues 83–90 (RGGLITFH), 150–152 (AIG), and 163–165 (GIG). Cysteine 181 (acyl-thioester intermediate) is an active-site residue.

The protein belongs to the LipB family.

It is found in the mitochondrion. The catalysed reaction is octanoyl-[ACP] + L-lysyl-[protein] = N(6)-octanoyl-L-lysyl-[protein] + holo-[ACP] + H(+). The protein operates within protein modification; protein lipoylation via endogenous pathway; protein N(6)-(lipoyl)lysine from octanoyl-[acyl-carrier-protein]: step 1/2. Catalyzes the transfer of endogenously produced octanoic acid from octanoyl-acyl-carrier-protein onto the lipoyl domains of lipoate-dependent enzymes. Lipoyl-ACP can also act as a substrate although octanoyl-ACP is likely to be the physiological substrate. The chain is Putative lipoyltransferase 2, mitochondrial from Drosophila melanogaster (Fruit fly).